A 188-amino-acid chain; its full sequence is F-box only protein 36 (188 aa).

Positions Phe91–Ile137 constitute an F-box domain.

As to quaternary structure, directly interacts with SKP1 and CUL1.

Its function is as follows. Substrate-recognition component of the SCF (SKP1-CUL1-F-box protein)-type E3 ubiquitin ligase complex. The protein is F-box only protein 36 (FBXO36) of Pongo abelii (Sumatran orangutan).